The chain runs to 289 residues: Oxaloacetate decarboxylase (289 aa).

Ser47 is a binding site for substrate. Residue Asp85 coordinates Mg(2+). Residues Arg156 and His232 each coordinate substrate.

This sequence belongs to the isocitrate lyase/PEP mutase superfamily. Oxaloacetate decarboxylase family. In terms of assembly, homotetramer; dimer of dimers. Mg(2+) serves as cofactor.

The enzyme catalyses oxaloacetate + H(+) = pyruvate + CO2. Functionally, catalyzes the decarboxylation of oxaloacetate into pyruvate. Seems to play a role in maintaining cellular concentrations of bicarbonate and pyruvate. This chain is Oxaloacetate decarboxylase, found in Rhodopseudomonas palustris (strain BisB5).